We begin with the raw amino-acid sequence, 192 residues long: ATP synthase subunit b 2 (192 aa).

A helical membrane pass occupies residues Ser39–Met59.

Belongs to the ATPase B chain family. As to quaternary structure, F-type ATPases have 2 components, F(1) - the catalytic core - and F(0) - the membrane proton channel. F(1) has five subunits: alpha(3), beta(3), gamma(1), delta(1), epsilon(1). F(0) has three main subunits: a(1), b(2) and c(10-14). The alpha and beta chains form an alternating ring which encloses part of the gamma chain. F(1) is attached to F(0) by a central stalk formed by the gamma and epsilon chains, while a peripheral stalk is formed by the delta and b chains.

The protein resides in the cell inner membrane. Its function is as follows. F(1)F(0) ATP synthase produces ATP from ADP in the presence of a proton or sodium gradient. F-type ATPases consist of two structural domains, F(1) containing the extramembraneous catalytic core and F(0) containing the membrane proton channel, linked together by a central stalk and a peripheral stalk. During catalysis, ATP synthesis in the catalytic domain of F(1) is coupled via a rotary mechanism of the central stalk subunits to proton translocation. Component of the F(0) channel, it forms part of the peripheral stalk, linking F(1) to F(0). The b'-subunit is a diverged and duplicated form of b found in plants and photosynthetic bacteria. The chain is ATP synthase subunit b 2 (atpF2) from Methylobacterium radiotolerans (strain ATCC 27329 / DSM 1819 / JCM 2831 / NBRC 15690 / NCIMB 10815 / 0-1).